The following is a 206-amino-acid chain: Glutathione peroxidase 1 (206 aa).

Ser-37 is subject to Phosphoserine. Sec-52 is a catalytic residue. A non-standard amino acid (selenocysteine) is located at residue Sec-52. N6-acetyllysine; alternate is present on residues Lys-91, Lys-117, and Lys-151. Residues Lys-91, Lys-117, and Lys-151 each carry the N6-succinyllysine; alternate modification. Residues Ser-200 and Ser-204 each carry the phosphoserine modification.

Belongs to the glutathione peroxidase family. Homotetramer. Interacts with MIEN1. Post-translationally, during periods of oxidative stress, Sec-52 may react with a superoxide radical, irreversibly lose hydroselenide and be converted to dehydroalanine.

It localises to the cytoplasm. Its subcellular location is the mitochondrion. The enzyme catalyses 2 glutathione + H2O2 = glutathione disulfide + 2 H2O. It carries out the reaction a hydroperoxy polyunsaturated fatty acid + 2 glutathione = a hydroxy polyunsaturated fatty acid + glutathione disulfide + H2O. It catalyses the reaction tert-butyl hydroperoxide + 2 glutathione = tert-butanol + glutathione disulfide + H2O. The catalysed reaction is cumene hydroperoxide + 2 glutathione = 2-phenylpropan-2-ol + glutathione disulfide + H2O. The enzyme catalyses (13S)-hydroperoxy-(9Z,11E)-octadecadienoate + 2 glutathione = (13S)-hydroxy-(9Z,11E)-octadecadienoate + glutathione disulfide + H2O. It carries out the reaction (9S)-hydroperoxy-(10E,12Z)-octadecadienoate + 2 glutathione = (9S)-hydroxy-(10E,12Z)-octadecadienoate + glutathione disulfide + H2O. It catalyses the reaction (5S)-hydroperoxy-(6E,8Z,11Z,14Z)-eicosatetraenoate + 2 glutathione = (5S)-hydroxy-(6E,8Z,11Z,14Z)-eicosatetraenoate + glutathione disulfide + H2O. The catalysed reaction is (12S)-hydroperoxy-(5Z,8Z,10E,14Z)-eicosatetraenoate + 2 glutathione = (12S)-hydroxy-(5Z,8Z,10E,14Z)-eicosatetraenoate + glutathione disulfide + H2O. The enzyme catalyses (12R)-hydroperoxy-(5Z,8Z,10E,14Z)-eicosatetraenoate + 2 glutathione = (12R)-hydroxy-(5Z,8Z,10E,14Z)-eicosatetraenoate + glutathione disulfide + H2O. It carries out the reaction (15S)-hydroperoxy-(5Z,8Z,11Z,13E)-eicosatetraenoate + 2 glutathione = (15S)-hydroxy-(5Z,8Z,11Z,13E)-eicosatetraenoate + glutathione disulfide + H2O. It catalyses the reaction (5S)-hydroperoxy-(6E,8Z,11Z,14Z,17Z)-eicosapentaenoate + 2 glutathione = (5S)-hydroxy-(6E,8Z,11Z,14Z,17Z)-eicosapentaenoate + glutathione disulfide + H2O. The catalysed reaction is (12S)-hydroperoxy-(5Z,8Z,10E,14Z,17Z)-eicosapentaenoate + 2 glutathione = (12S)-hydroxy-(5Z,8Z,10E,14Z,17Z)-eicosapentaenoate + glutathione disulfide + H2O. The enzyme catalyses (15S)-hydroperoxy-(5Z,8Z,11Z,13E,17Z)-eicosapentaenoate + 2 glutathione = (15S)-hydroxy-(5Z,8Z,11Z,13E,17Z)-eicosapentaenoate + glutathione disulfide + H2O. It carries out the reaction (15S)-hydroperoxy-(11Z,13E)-eicosadienoate + 2 glutathione = (15S)-hydroxy-(11Z,13E)-eicosadienoate + glutathione disulfide + H2O. It catalyses the reaction (17S)-hydroperoxy-(4Z,7Z,10Z,13Z,15E,19Z)-docosahexaenoate + 2 glutathione = (17S)-hydroxy-(4Z,7Z,10Z,13Z,15E,19Z)-docosahexaenoate + glutathione disulfide + H2O. Functionally, catalyzes the reduction of hydroperoxides in a glutathione-dependent manner thus regulating cellular redox homeostasis. Can reduce small soluble hydroperoxides such as H2O2, cumene hydroperoxide and tert-butyl hydroperoxide, as well as several fatty acid-derived hydroperoxides. In platelets catalyzes the reduction of 12-hydroperoxyeicosatetraenoic acid, the primary product of the arachidonate 12-lipoxygenase pathway. In Sus scrofa (Pig), this protein is Glutathione peroxidase 1 (GPX1).